Here is a 37-residue protein sequence, read N- to C-terminus: Ice-structuring protein 3 (37 aa).

It belongs to the type-I AFP family.

Functionally, contributes to protect fish blood from freezing at subzero sea water temperatures. Lowers the blood freezing point. Binds to nascent ice crystals and prevents further growth. In Pseudopleuronectes americanus (Winter flounder), this protein is Ice-structuring protein 3.